A 71-amino-acid polypeptide reads, in one-letter code: Stathmin-1-B (71 aa).

The stretch at Lys-1 to Glu-67 forms a coiled coil. Positions Lys-1–Asp-71 constitute an SLD domain.

The protein belongs to the stathmin family. As to quaternary structure, binds to two alpha/beta-tubulin heterodimers. Post-translationally, from unphosphorylated forms to highly phosphorylated ones in the mature egg, followed by progressive dephosphorylation from the mid-blastula to the tailbud stage. Ubiquitous. Mostly abundant in brain and oocytes.

Its subcellular location is the cytoplasm. The protein resides in the cytoskeleton. Its function is as follows. Involved in the regulation of the microtubule (MT) filament system by destabilizing microtubules. It prevents assembly and promotes disassembly of microtubules. The polypeptide is Stathmin-1-B (stmn1-b) (Xenopus laevis (African clawed frog)).